The chain runs to 943 residues: MLKLLFGDPNTRKLKRYQPIVEEINFLEEEISQLTDDDLRKETQNLKSKISSELDFKKQKELLEEFLPKAFAIVREASKRVLDMRHFDVQLIGGMVLHECQIAEMKTGEGKTLVATLPCYLNALTGKGVHVVTVNDYLARRDAEWMGQVHRFLGLSVGLIQQDMNPVERKKNYDCDITYATNSELGFDYLRDNMATDVNEVVQRKFNYCVIDEVDSILIDEARTPLIISGQVERPQEKYQKAAQLSLKLVKAKELSKDGIDPEGDYEVDEKQRSCILTDQGFAKCEEYLGVNDLYNPKDPWAHYITNALKAKELFIKDVNYIIKNNEAVIVDEFTGRVMPGRRWSDGQHQAIEAKESLQIQPETQTLASITYQNFFLLYPGLAGMTGTAKTEEVEFEKTYKLESTVIPTNQLRKRKDWSDQVFKTEIGKWKAVAKETANIHRDGRPVLVGTTSVEKSELLSSLLSEEKIPHNLLNAKPENVEREAEIVAQAGRAGAVTIATNMAGRGTDIILGGNSDYMARLKLKEILIPLLVKPDNEHKPPIPKQRNSKSKGGFSKKASSKLKKNISNSSTSLFPCKLDEAIEKQLSLLSDELVKNWGDRQLSVLELDDRIATAAEKAPTDDDLIKLLRESLSAVKKEYEKVLTHEEEKVRKAGGLHVIGTERHESRRVDNQLRGRAGRQGDLGSTRFFLSLEDNLLRIFGGDRVANLMNAFRVDEDMPIESGMLTRSLESAQKKVETYYYDIRKQVFEYDEVMNNQRKAVYGERLRVLKGNDLKRQVIGYGERTMSEIVDAYINPDLPPEEWNIDQLISKVKEFIYLLDDLKSEDINLLSIEELKNYLQEQLRIAYDLKESQIEKIRPGLMREAERFFILQQIDNLWREHLQSMDSLRESVGLRGYGQKDPLIEYKNEGYDMFLEMMTNMRRNVIYSMFMFQPKTEVNEKK.

ATP-binding positions include Gln-90, 108–112, and Asp-509; that span reads GEGKT. Residues 535-564 are disordered; that stretch reads PDNEHKPPIPKQRNSKSKGGFSKKASSKLK.

Belongs to the SecA family. Monomer and homodimer. Part of the essential Sec protein translocation apparatus which comprises SecA, SecYEG and auxiliary proteins SecDF. Other proteins may also be involved.

The protein resides in the cell inner membrane. It is found in the cellular thylakoid membrane. Its subcellular location is the cytoplasm. The catalysed reaction is ATP + H2O + cellular proteinSide 1 = ADP + phosphate + cellular proteinSide 2.. Its function is as follows. Part of the Sec protein translocase complex. Interacts with the SecYEG preprotein conducting channel. Has a central role in coupling the hydrolysis of ATP to the transfer of proteins into and across the cell membrane, serving as an ATP-driven molecular motor driving the stepwise translocation of polypeptide chains across the membrane. Functionally, probably participates in protein translocation into and across both the cytoplasmic and thylakoid membranes in cyanobacterial cells. The chain is Protein translocase subunit SecA from Prochlorococcus marinus (strain MIT 9215).